The chain runs to 67 residues: ATP synthase protein 8 (67 aa).

A helical membrane pass occupies residues 8-24 (TWFITILSMLMTLFILF). Lys54 carries the post-translational modification N6-acetyllysine; alternate. Lys54 carries the post-translational modification N6-succinyllysine; alternate. Position 57 is an N6-acetyllysine (Lys57).

It belongs to the ATPase protein 8 family. F-type ATPases have 2 components, CF(1) - the catalytic core - and CF(0) - the membrane proton channel. Component of an ATP synthase complex composed of ATP5PB, ATP5MC1, ATP5F1E, ATP5PD, ATP5ME, ATP5PF, ATP5MF, MT-ATP6, MT-ATP8, ATP5F1A, ATP5F1B, ATP5F1D, ATP5F1C, ATP5PO, ATP5MG, ATP5MK and ATP5MJ. Interacts with PRICKLE3.

Its subcellular location is the mitochondrion membrane. In terms of biological role, mitochondrial membrane ATP synthase (F(1)F(0) ATP synthase or Complex V) produces ATP from ADP in the presence of a proton gradient across the membrane which is generated by electron transport complexes of the respiratory chain. F-type ATPases consist of two structural domains, F(1) - containing the extramembraneous catalytic core and F(0) - containing the membrane proton channel, linked together by a central stalk and a peripheral stalk. During catalysis, ATP synthesis in the catalytic domain of F(1) is coupled via a rotary mechanism of the central stalk subunits to proton translocation. Part of the complex F(0) domain. Minor subunit located with subunit a in the membrane. This chain is ATP synthase protein 8 (MT-ATP8), found in Vicugna pacos (Alpaca).